The primary structure comprises 225 residues: 7-cyano-7-deazaguanine synthase (225 aa).

10–20 serves as a coordination point for ATP; that stretch reads FSGGQDSTTLA. Residues Cys-190, Cys-205, Cys-208, and Cys-211 each coordinate Zn(2+).

It belongs to the QueC family. It depends on Zn(2+) as a cofactor.

The catalysed reaction is 7-carboxy-7-deazaguanine + NH4(+) + ATP = 7-cyano-7-deazaguanine + ADP + phosphate + H2O + H(+). It functions in the pathway purine metabolism; 7-cyano-7-deazaguanine biosynthesis. In terms of biological role, catalyzes the ATP-dependent conversion of 7-carboxy-7-deazaguanine (CDG) to 7-cyano-7-deazaguanine (preQ(0)). This is 7-cyano-7-deazaguanine synthase from Helicobacter pylori (strain J99 / ATCC 700824) (Campylobacter pylori J99).